The following is a 218-amino-acid chain: Riboflavin kinase (218 aa).

The N-terminal stretch at 1-19 (MFTWTIYVSLLLVLAGTFL) is a signal peptide. 2 residues coordinate Mg(2+): T72 and N74. E155 serves as the catalytic Nucleophile.

The protein belongs to the flavokinase family. Zn(2+) serves as cofactor. It depends on Mg(2+) as a cofactor.

The protein resides in the microsome. Its subcellular location is the mitochondrion inner membrane. It is found in the endoplasmic reticulum. The catalysed reaction is riboflavin + ATP = FMN + ADP + H(+). Its pathway is cofactor biosynthesis; FMN biosynthesis; FMN from riboflavin (ATP route): step 1/1. In terms of biological role, catalyzes the phosphorylation of riboflavin (vitamin B2) to form flavin mononucleotide (FMN) coenzyme. The polypeptide is Riboflavin kinase (FMN1) (Saccharomyces cerevisiae (strain ATCC 204508 / S288c) (Baker's yeast)).